A 124-amino-acid polypeptide reads, in one-letter code: Glucagon-1 (124 aa).

Residues 1 to 25 form the signal peptide; that stretch reads MKRIHSLAGILLVLGLIQSSCRVLM. Residues 28–54 are disordered; it reads ADPSSSLEADSTLKDEPRELSNMKRHS. Over residues 38 to 54 the composition is skewed to basic and acidic residues; sequence STLKDEPRELSNMKRHS. A propeptide spanning residues 84-88 is cleaved from the precursor; that stretch reads SGVAE.

It belongs to the glucagon family.

It is found in the secreted. Functionally, glucagon plays a key role in glucose metabolism and homeostasis. Regulates blood glucose by increasing gluconeogenesis and decreasing glycolysis. The sequence is that of Glucagon-1 (gcg1) from Lophius americanus (American angler).